A 447-amino-acid polypeptide reads, in one-letter code: MREIIHVSAGQCGNQIGAAFWETISGEHGINPSAIYEGTDPLQLERLSVYYNEAGNGKYVPRAVLVDLEPGVMDAVRSGTYGNLFRPDNFIFGQSGAGNNWAKGHYTEGAELVDSVLDIVRREAENSDSLQGFQISHSLGGGTGSGMGTLLISKIREEYPDRMMATFSVVPSPKVSDTIVEPYNATLSVHQLIENADETFCIDNEALYDICQHTLKLKQPTHADLNQLVSGVMSGITTCLRFPGQLNSDLRKLAVNLVPFPRLHFFMVGYAPLSAPGQQSFRSLTVPELTQQLFDSKNMMAASDPKRGRYLTVAAFFRGKVSIKEVEDQMRSVQERNSAYFVEWIPNNVQTAICSVPPKDVKMSATFIANSTSIQELFKRVGDQFSAMFRRKAFLHWYTNEGMDITEFAEAESNMNDLVSEYQQYQNATVDDEDMEYEDELPLEDEM.

8 residues coordinate GTP: Q11, E69, S138, G142, T143, G144, N204, and N226. Position 69 (E69) interacts with Mg(2+).

This sequence belongs to the tubulin family. Dimer of alpha and beta chains. A typical microtubule is a hollow water-filled tube with an outer diameter of 25 nm and an inner diameter of 15 nM. Alpha-beta heterodimers associate head-to-tail to form protofilaments running lengthwise along the microtubule wall with the beta-tubulin subunit facing the microtubule plus end conferring a structural polarity. Microtubules usually have 13 protofilaments but different protofilament numbers can be found in some organisms and specialized cells. It depends on Mg(2+) as a cofactor.

The protein resides in the cytoplasm. It localises to the cytoskeleton. In terms of biological role, tubulin is the major constituent of microtubules, a cylinder consisting of laterally associated linear protofilaments composed of alpha- and beta-tubulin heterodimers. Microtubules grow by the addition of GTP-tubulin dimers to the microtubule end, where a stabilizing cap forms. Below the cap, tubulin dimers are in GDP-bound state, owing to GTPase activity of alpha-tubulin. The polypeptide is Tubulin beta-1 chain (Geotrichum candidum (Oospora lactis)).